The primary structure comprises 312 residues: Pantothenate kinase (312 aa).

97 to 104 (GSVAVGKS) is an ATP binding site.

It belongs to the prokaryotic pantothenate kinase family.

The protein resides in the cytoplasm. It carries out the reaction (R)-pantothenate + ATP = (R)-4'-phosphopantothenate + ADP + H(+). The protein operates within cofactor biosynthesis; coenzyme A biosynthesis; CoA from (R)-pantothenate: step 1/5. The protein is Pantothenate kinase of Mycobacterium bovis (strain BCG / Pasteur 1173P2).